The primary structure comprises 43 residues: Mu-conotoxin-like Cal 12.2c (43 aa).

Residue Arg1 is a propeptide. Disulfide bonds link Cys4-Cys16, Cys11-Cys24, Cys18-Cys29, and Cys23-Cys35. Residue Trp31 is modified to 6'-bromotryptophan. Position 36 is a 4-hydroxyproline (Pro36). 6'-bromotryptophan is present on Trp40.

As to expression, expressed by the venom duct.

The protein resides in the secreted. Mu-conotoxins block voltage-gated sodium channels. This toxin reversibly blocks voltage-gated sodium channel in cephalopods, with no alteration in the voltage dependence of sodium conductance or on the kinetics of inactivation. The protein is Mu-conotoxin-like Cal 12.2c of Californiconus californicus (California cone).